The sequence spans 652 residues: DNA ligase (652 aa).

NAD(+) is bound by residues 29–33 (DAEYD), 78–79 (SL), and glutamate 107. Lysine 109 (N6-AMP-lysine intermediate) is an active-site residue. Residues arginine 130, glutamate 164, lysine 278, and lysine 302 each coordinate NAD(+). Positions 395, 398, 413, and 418 each coordinate Zn(2+). One can recognise a BRCT domain in the interval 577 to 652 (ADDAILSGKT…VKDEAWLLDL (76 aa)).

The protein belongs to the NAD-dependent DNA ligase family. LigA subfamily. Requires Mg(2+) as cofactor. It depends on Mn(2+) as a cofactor.

The enzyme catalyses NAD(+) + (deoxyribonucleotide)n-3'-hydroxyl + 5'-phospho-(deoxyribonucleotide)m = (deoxyribonucleotide)n+m + AMP + beta-nicotinamide D-nucleotide.. Its function is as follows. DNA ligase that catalyzes the formation of phosphodiester linkages between 5'-phosphoryl and 3'-hydroxyl groups in double-stranded DNA using NAD as a coenzyme and as the energy source for the reaction. It is essential for DNA replication and repair of damaged DNA. The chain is DNA ligase from Streptococcus thermophilus (strain CNRZ 1066).